Reading from the N-terminus, the 289-residue chain is Pantothenate synthetase (289 aa).

33-40 (MGYLHEGH) is a binding site for ATP. Residue His40 is the Proton donor of the active site. Gln70 is a binding site for (R)-pantoate. Gln70 provides a ligand contact to beta-alanine. Position 157-160 (157-160 (GEKD)) interacts with ATP. Residue Gln163 coordinates (R)-pantoate. Residues Val186 and 194–197 (LSSR) contribute to the ATP site.

It belongs to the pantothenate synthetase family. Homodimer.

Its subcellular location is the cytoplasm. It carries out the reaction (R)-pantoate + beta-alanine + ATP = (R)-pantothenate + AMP + diphosphate + H(+). Its pathway is cofactor biosynthesis; (R)-pantothenate biosynthesis; (R)-pantothenate from (R)-pantoate and beta-alanine: step 1/1. Functionally, catalyzes the condensation of pantoate with beta-alanine in an ATP-dependent reaction via a pantoyl-adenylate intermediate. The protein is Pantothenate synthetase of Anaeromyxobacter dehalogenans (strain 2CP-C).